The following is a 112-amino-acid chain: Pediocin PA-1 immunity protein (112 aa).

Functionally, imparts immunity to pediocin PA-1/ACH to naturally sensitive host strains. The chain is Pediocin PA-1 immunity protein (pedB) from Pediococcus acidilactici.